An 870-amino-acid polypeptide reads, in one-letter code: DNA mismatch repair protein MutS (870 aa).

608 to 615 (GPNMAGKS) contributes to the ATP binding site.

The protein belongs to the DNA mismatch repair MutS family.

Functionally, this protein is involved in the repair of mismatches in DNA. It is possible that it carries out the mismatch recognition step. This protein has a weak ATPase activity. This is DNA mismatch repair protein MutS from Persephonella marina (strain DSM 14350 / EX-H1).